The primary structure comprises 475 residues: Aspartyl/glutamyl-tRNA(Asn/Gln) amidotransferase subunit B (475 aa).

The protein belongs to the GatB/GatE family. GatB subfamily. As to quaternary structure, heterotrimer of A, B and C subunits.

It carries out the reaction L-glutamyl-tRNA(Gln) + L-glutamine + ATP + H2O = L-glutaminyl-tRNA(Gln) + L-glutamate + ADP + phosphate + H(+). The catalysed reaction is L-aspartyl-tRNA(Asn) + L-glutamine + ATP + H2O = L-asparaginyl-tRNA(Asn) + L-glutamate + ADP + phosphate + 2 H(+). Functionally, allows the formation of correctly charged Asn-tRNA(Asn) or Gln-tRNA(Gln) through the transamidation of misacylated Asp-tRNA(Asn) or Glu-tRNA(Gln) in organisms which lack either or both of asparaginyl-tRNA or glutaminyl-tRNA synthetases. The reaction takes place in the presence of glutamine and ATP through an activated phospho-Asp-tRNA(Asn) or phospho-Glu-tRNA(Gln). This is Aspartyl/glutamyl-tRNA(Asn/Gln) amidotransferase subunit B from Agathobacter rectalis (strain ATCC 33656 / DSM 3377 / JCM 17463 / KCTC 5835 / VPI 0990) (Eubacterium rectale).